Consider the following 719-residue polypeptide: Fatty acid oxidation complex subunit alpha (719 aa).

Residues 1–190 (MVYQGNRITV…KLGLVDATVA (190 aa)) form an enoyl-CoA hydratase/isomerase region. Asp-298 contacts substrate. The 3-hydroxyacyl-CoA dehydrogenase stretch occupies residues 313–719 (HEINEAAVLG…AAGETFYATA (407 aa)). Residues Met-326, Asp-345, 402-404 (VVE), Lys-409, and Ser-431 contribute to the NAD(+) site. Catalysis depends on His-452, which acts as the For 3-hydroxyacyl-CoA dehydrogenase activity. Asn-455 is a binding site for NAD(+). Asn-502 serves as a coordination point for substrate.

In the N-terminal section; belongs to the enoyl-CoA hydratase/isomerase family. The protein in the C-terminal section; belongs to the 3-hydroxyacyl-CoA dehydrogenase family. As to quaternary structure, heterotetramer of two alpha chains (FadB) and two beta chains (FadA).

The catalysed reaction is a (3S)-3-hydroxyacyl-CoA + NAD(+) = a 3-oxoacyl-CoA + NADH + H(+). It catalyses the reaction a (3S)-3-hydroxyacyl-CoA = a (2E)-enoyl-CoA + H2O. It carries out the reaction a 4-saturated-(3S)-3-hydroxyacyl-CoA = a (3E)-enoyl-CoA + H2O. The enzyme catalyses (3S)-3-hydroxybutanoyl-CoA = (3R)-3-hydroxybutanoyl-CoA. The catalysed reaction is a (3Z)-enoyl-CoA = a 4-saturated (2E)-enoyl-CoA. It catalyses the reaction a (3E)-enoyl-CoA = a 4-saturated (2E)-enoyl-CoA. Its pathway is lipid metabolism; fatty acid beta-oxidation. Involved in the aerobic and anaerobic degradation of long-chain fatty acids via beta-oxidation cycle. Catalyzes the formation of 3-oxoacyl-CoA from enoyl-CoA via L-3-hydroxyacyl-CoA. It can also use D-3-hydroxyacyl-CoA and cis-3-enoyl-CoA as substrate. This chain is Fatty acid oxidation complex subunit alpha, found in Psychrobacter arcticus (strain DSM 17307 / VKM B-2377 / 273-4).